The chain runs to 111 residues: Ribonuclease P protein component (111 aa).

Belongs to the RnpA family. In terms of assembly, consists of a catalytic RNA component (M1 or rnpB) and a protein subunit.

It carries out the reaction Endonucleolytic cleavage of RNA, removing 5'-extranucleotides from tRNA precursor.. In terms of biological role, RNaseP catalyzes the removal of the 5'-leader sequence from pre-tRNA to produce the mature 5'-terminus. It can also cleave other RNA substrates such as 4.5S RNA. The protein component plays an auxiliary but essential role in vivo by binding to the 5'-leader sequence and broadening the substrate specificity of the ribozyme. This Streptococcus thermophilus (strain ATCC BAA-491 / LMD-9) protein is Ribonuclease P protein component.